Reading from the N-terminus, the 54-residue chain is UPF0391 membrane protein PFL_0093 (54 aa).

2 helical membrane-spanning segments follow: residues 4–24 (WAITFLIIAIVAAVLGFGGIA) and 29–49 (GIAKILFVVFLVMFIASFFFG).

This sequence belongs to the UPF0391 family.

Its subcellular location is the cell membrane. This chain is UPF0391 membrane protein PFL_0093, found in Pseudomonas fluorescens (strain ATCC BAA-477 / NRRL B-23932 / Pf-5).